The primary structure comprises 86 residues: Small ribosomal subunit protein bS18 (86 aa).

It belongs to the bacterial ribosomal protein bS18 family. Part of the 30S ribosomal subunit. Forms a tight heterodimer with protein bS6.

Functionally, binds as a heterodimer with protein bS6 to the central domain of the 16S rRNA, where it helps stabilize the platform of the 30S subunit. This Protochlamydia amoebophila (strain UWE25) protein is Small ribosomal subunit protein bS18.